We begin with the raw amino-acid sequence, 510 residues long: NAD(P)H-quinone oxidoreductase subunit 2 B, chloroplastic (510 aa).

13 helical membrane-spanning segments follow: residues 24-44, 57-77, 99-119, 124-144, 149-169, 183-203, 227-247, 295-315, 323-343, 354-374, 395-415, 418-438, and 482-502; these read LLLFDGSFIFPECILIFGLIL, ISWFYFISSTSLVMSIVVLLF, IFQFLILLSSTLCIPLSVEYI, MAITEFLLFVLTATLGGMFLC, LITIFVAPECFSLCSYLLSGY, YLLMGGASSSILVHGFSWLYG, PGISIALIFITVGIGFKLSLA, WHLLLEILAILSMILGNLIAI, MLAYSSIGQIGYVIIGIIVGD, YMLFYISMNLGTFACIVSFGL, ALSLALCLLSLGGLPPLAGFF, LYLFWCGWQAGLYFLVSIGLL, and LSMIVCVIASTISGISMNPII.

This sequence belongs to the complex I subunit 2 family. As to quaternary structure, NDH is composed of at least 16 different subunits, 5 of which are encoded in the nucleus.

The protein localises to the plastid. The protein resides in the chloroplast thylakoid membrane. The catalysed reaction is a plastoquinone + NADH + (n+1) H(+)(in) = a plastoquinol + NAD(+) + n H(+)(out). The enzyme catalyses a plastoquinone + NADPH + (n+1) H(+)(in) = a plastoquinol + NADP(+) + n H(+)(out). NDH shuttles electrons from NAD(P)H:plastoquinone, via FMN and iron-sulfur (Fe-S) centers, to quinones in the photosynthetic chain and possibly in a chloroplast respiratory chain. The immediate electron acceptor for the enzyme in this species is believed to be plastoquinone. Couples the redox reaction to proton translocation, and thus conserves the redox energy in a proton gradient. In Lotus japonicus (Lotus corniculatus var. japonicus), this protein is NAD(P)H-quinone oxidoreductase subunit 2 B, chloroplastic.